Here is a 450-residue protein sequence, read N- to C-terminus: MSTHVTFDYSKALSFIGEHEITYLRDAVKVTHHAIHEKTGAGNDFLGWVDLPLQYDKEEFARIQKCAEKIKNDSDILLVVGIGGSYLGARAAIEMLNHSFYNTLSKEQRKTPQVLFVGQNISSTYMKDLMDVLEGKDFSINVISKSGTTTEPALAFRIFRKLLEEKYGKEEARKRIYATTDKARGALKTLADNEGYETFVIPDDVGGRFSVLTPVGLLPIAVSGLNIEEMMKGAAAGRDDFGTSELEENPAYQYAVVRNALYNKGKTIEMLVNYEPALQYFAEWWKQLFGESEGKDQKGIFPSSANFSTDLHSLGQYVQEGRRDLFETVLKVGKSTHELTIESEENDLDGLNYLAGETVDFVNTKAYEGTLLAHSDGGVPNLIVNIPELNEYTFGYLVYFFEKACAMSGYLLGVNPFDQPGVEAYKKNMFALLGKPGFEELKAELEERLK.

The residue at position 39 (T39) is a Phosphothreonine. E291 acts as the Proton donor in catalysis. Active-site residues include H312 and K426.

It belongs to the GPI family.

It localises to the cytoplasm. The enzyme catalyses alpha-D-glucose 6-phosphate = beta-D-fructose 6-phosphate. It participates in carbohydrate biosynthesis; gluconeogenesis. Its pathway is carbohydrate degradation; glycolysis; D-glyceraldehyde 3-phosphate and glycerone phosphate from D-glucose: step 2/4. In terms of biological role, catalyzes the reversible isomerization of glucose-6-phosphate to fructose-6-phosphate. The protein is Glucose-6-phosphate isomerase of Bacillus thuringiensis (strain Al Hakam).